The sequence spans 393 residues: Formate-dependent phosphoribosylglycinamide formyltransferase (393 aa).

N(1)-(5-phospho-beta-D-ribosyl)glycinamide contacts are provided by residues 22-23 and Glu82; that span reads EL. ATP is bound by residues Arg114, Lys155, 160-165, 195-198, and Glu203; these read SSGKGQ and EGLV. The ATP-grasp domain occupies 119–308; sequence RLAAETLQLP…EFALHVRAFL (190 aa). The Mg(2+) site is built by Glu267 and Glu279. Residues Asp286, Lys355, and 362-363 each bind N(1)-(5-phospho-beta-D-ribosyl)glycinamide; that span reads RR.

This sequence belongs to the PurK/PurT family. In terms of assembly, homodimer.

It carries out the reaction N(1)-(5-phospho-beta-D-ribosyl)glycinamide + formate + ATP = N(2)-formyl-N(1)-(5-phospho-beta-D-ribosyl)glycinamide + ADP + phosphate + H(+). The protein operates within purine metabolism; IMP biosynthesis via de novo pathway; N(2)-formyl-N(1)-(5-phospho-D-ribosyl)glycinamide from N(1)-(5-phospho-D-ribosyl)glycinamide (formate route): step 1/1. Functionally, involved in the de novo purine biosynthesis. Catalyzes the transfer of formate to 5-phospho-ribosyl-glycinamide (GAR), producing 5-phospho-ribosyl-N-formylglycinamide (FGAR). Formate is provided by PurU via hydrolysis of 10-formyl-tetrahydrofolate. The chain is Formate-dependent phosphoribosylglycinamide formyltransferase from Yersinia pseudotuberculosis serotype IB (strain PB1/+).